We begin with the raw amino-acid sequence, 1820 residues long: Cation channel sperm-associated targeting subunit tau (1820 aa).

Positions 87–222 (DSEELEITQE…QKGCFIEEVQ (136 aa)) constitute a C2 domain. Disordered regions lie at residues 360–383 (SEETNIDEASENTKSNHPEEELEN), 403–443 (LLDN…TEVH), 695–722 (EVSMNSEAREKSSSPLLSIHDKSSSSME), and 838–857 (SSTKKKHLISEVPNSKSGSS). Polar residues predominate over residues 415-443 (PTLNQSDQDNSTADASKNDESTPSPTEVH).

In terms of assembly, component of the CatSper complex or CatSpermasome composed of the core pore-forming members CATSPER1, CATSPER2, CATSPER3 and CATSPER4 as well as auxiliary members CATSPERB, CATSPERG, CATSPERD, CATSPERE, CATSPERZ, C2CD6/CATSPERT, TMEM249, TMEM262 and EFCAB9. HSPA1 may be an additional auxiliary complex member. The core complex members CATSPER1, CATSPER2, CATSPER3 and CATSPER4 form a heterotetrameric channel. The auxiliary CATSPERB, CATSPERG, CATSPERD and CATSPERE subunits form a pavilion-like structure over the pore which stabilizes the complex through interactions with CATSPER4, CATSPER3, CATSPER1 and CATSPER2 respectively. SLCO6C1 interacts with CATSPERE and TMEM262/CATSPERH interacts with CATSPERB, further stabilizing the complex. C2CD6/CATSPERT interacts at least with CATSPERD and is required for targeting the CatSper complex in the flagellar membrane. In terms of tissue distribution, expressed in testis (at protein level).

It is found in the cell projection. Its subcellular location is the cilium. The protein localises to the flagellum membrane. Auxiliary component of the CatSper complex, a complex involved in sperm cell hyperactivation. Sperm cell hyperactivation is needed for sperm motility which is essential late in the preparation of sperm for fertilization. Required for CatSper complex targeting and trafficking into the quadrilinear nanodomains. Targets the preassembled CatSper complexes to elongating flagella, where it links the channel-carrying vesicles and motor proteins. In Homo sapiens (Human), this protein is Cation channel sperm-associated targeting subunit tau.